We begin with the raw amino-acid sequence, 152 residues long: Cytosolic calcium-binding protein 1 (152 aa).

Repeat copies occupy residues 57 to 62 (VEETEK), 67 to 71 (TEEAQ), 78 to 82 (VEIKK), 104 to 108 (VEAKK), 112 to 116 (VEEKK), 124 to 129 (VEEEKK), and 131 to 136 (EAEEEK). Positions 57–136 (VEETEKPIEE…EKKPEAEEEK (80 aa)) are 7 X 5 AA approximate repeats of V-E-E-K-K. Residues 60-152 (TEKPIEETEE…VTAPVEKADE (93 aa)) form a disordered region. Basic and acidic residues predominate over residues 96–138 (DESKTEEVVEAKKEEEVEEKKTEEAPVVVEEEKKPEAEEEKPA).

In terms of tissue distribution, predominantly expressed in petioles (at protein level). Mainly observed in shoots, flowers, siliques and roots, and, to a lower extent, in stems and leaves.

It localises to the cytoplasm. Its subcellular location is the cytosol. Its function is as follows. Binds calcium Ca(2+) and may act as a signal mediator to buffer Ca(2+). The sequence is that of Cytosolic calcium-binding protein 1 from Arabidopsis thaliana (Mouse-ear cress).